The primary structure comprises 440 residues: Calcium/calmodulin-regulated receptor-like kinase 1 (440 aa).

The helical transmembrane segment at 8 to 28 (LIVGISLGLVIGVVLAISALF) threads the bilayer. The interval 28-228 (FCFRYHRKKS…ARGLEYLHDG (201 aa)) is calmodulin binding. One can recognise a Protein kinase domain in the interval 113 to 380 (CNFTTLIGQG…DIVQVLTRVI (268 aa)). Residues 119–127 (IGQGAFGPV) and K141 contribute to the ATP site. The residue at position 186 (Y186) is a Phosphotyrosine. D237 functions as the Proton acceptor in the catalytic mechanism. S241 carries the post-translational modification Phosphoserine. T274 bears the Phosphothreonine mark. A Phosphotyrosine modification is found at Y282. Residues 369–440 (MRDIVQVLTR…DSSIAEDVIL (72 aa)) are calmodulin binding. The disordered stretch occupies residues 386–427 (RKRQKNSPSPSPRLPPPPPIVEESEGELTANGSLRSEIHRRD). The span at 394 to 405 (SPSPRLPPPPPI) shows a compositional bias: pro residues.

The protein belongs to the protein kinase superfamily. Ser/Thr protein kinase family. In terms of assembly, interacts with calmodulin (CaM) in a calcium- (Ca(2+)-) dependent manner. Binds to MEKK1. Similar transcript expression levels in seedlings, roots, leaves, stems and flowers, and lower levels in siliques, but protein accumulates mostly in 7-day-old seedlings, old roots and young leaves and, to a lower extent, in young roots, old leaves, flowers and siliques (at protein level).

It is found in the cell membrane. It localises to the endosome membrane. The catalysed reaction is L-seryl-[protein] + ATP = O-phospho-L-seryl-[protein] + ADP + H(+). It catalyses the reaction L-threonyl-[protein] + ATP = O-phospho-L-threonyl-[protein] + ADP + H(+). Its activity is regulated as follows. Kinase activity is stimulated by calcium/calmodulin, but blocked by chlorpromazine. Functionally, required for cold tolerance, via the activation of MAP kinases activity. Phosphorylates and activates MEKK1 in response to cold in a calcium-dependent manner. The sequence is that of Calcium/calmodulin-regulated receptor-like kinase 1 from Arabidopsis thaliana (Mouse-ear cress).